The sequence spans 202 residues: LexA repressor 2 (202 aa).

Residues 28–48 (LADIATRFGFASRSVARKHIT) constitute a DNA-binding region (H-T-H motif). Residues Ser123 and Lys160 each act as for autocatalytic cleavage activity in the active site.

It belongs to the peptidase S24 family. Homodimer.

It catalyses the reaction Hydrolysis of Ala-|-Gly bond in repressor LexA.. Functionally, represses a number of genes involved in the response to DNA damage (SOS response), including recA and lexA. In the presence of single-stranded DNA, RecA interacts with LexA causing an autocatalytic cleavage which disrupts the DNA-binding part of LexA, leading to derepression of the SOS regulon and eventually DNA repair. In Pseudomonas putida (strain ATCC 47054 / DSM 6125 / CFBP 8728 / NCIMB 11950 / KT2440), this protein is LexA repressor 2.